Consider the following 295-residue polypeptide: Acetaldehyde dehydrogenase (295 aa).

11–14 is an NAD(+) binding site; that stretch reads SGNI. The active-site Acyl-thioester intermediate is the Cys127. NAD(+) contacts are provided by residues 158-166 and Asn270; that span reads SAGPGTRAN.

The protein belongs to the acetaldehyde dehydrogenase family.

The enzyme catalyses acetaldehyde + NAD(+) + CoA = acetyl-CoA + NADH + H(+). This Geobacillus thermodenitrificans (strain NG80-2) protein is Acetaldehyde dehydrogenase (nbaJ).